The following is a 488-amino-acid chain: 6-phosphogluconate dehydrogenase, decarboxylating (488 aa).

NADP(+) contacts are provided by residues 9 to 14, 32 to 34, 74 to 76, and Asn102; these read GLAVMG, NRT, and VKA. Substrate contacts are provided by residues Asn102 and 128 to 130; that span reads SGG. The active-site Proton acceptor is the Lys183. Residue 186–187 participates in substrate binding; sequence HN. Catalysis depends on Glu190, which acts as the Proton donor. Residues Tyr191, Lys260, Arg287, Arg451, and His457 each coordinate substrate.

The protein belongs to the 6-phosphogluconate dehydrogenase family. As to quaternary structure, homodimer.

The enzyme catalyses 6-phospho-D-gluconate + NADP(+) = D-ribulose 5-phosphate + CO2 + NADPH. The protein operates within carbohydrate degradation; pentose phosphate pathway; D-ribulose 5-phosphate from D-glucose 6-phosphate (oxidative stage): step 3/3. Functionally, catalyzes the oxidative decarboxylation of 6-phosphogluconate to ribulose 5-phosphate and CO(2), with concomitant reduction of NADP to NADPH. This chain is 6-phosphogluconate dehydrogenase, decarboxylating (gnd), found in Treponema pallidum (strain Nichols).